A 727-amino-acid polypeptide reads, in one-letter code: Elongation factor 2 (727 aa).

In terms of domain architecture, tr-type G spans 19 to 260; it reads DQIRNMGICA…MAITHLPNPL (242 aa). Residues 28-35, 94-98, and 148-151 each bind GTP; these read AHIDHGKT, DTPGH, and NKVD. Position 603 is a diphthamide (His-603).

Belongs to the TRAFAC class translation factor GTPase superfamily. Classic translation factor GTPase family. EF-G/EF-2 subfamily.

It localises to the cytoplasm. Catalyzes the GTP-dependent ribosomal translocation step during translation elongation. During this step, the ribosome changes from the pre-translocational (PRE) to the post-translocational (POST) state as the newly formed A-site-bound peptidyl-tRNA and P-site-bound deacylated tRNA move to the P and E sites, respectively. Catalyzes the coordinated movement of the two tRNA molecules, the mRNA and conformational changes in the ribosome. The sequence is that of Elongation factor 2 from Methanococcus maripaludis (strain C6 / ATCC BAA-1332).